The primary structure comprises 563 residues: Bifunctional dihydrofolate reductase-thymidylate synthase (563 aa).

In terms of domain architecture, DHFR spans 3–195; sequence KFNIIAAINN…ILLRFQEYSV (193 aa). Residue 117–124 participates in NADP(+) binding; the sequence is GGGVIYDL. The thymidylate synthase stretch occupies residues 275–563; sequence YIELVKTIME…CPSISAEMIA (289 aa). Arg-292 is a dUMP binding site. Cys-435 is an active-site residue. Residues His-436, 464-468, Asn-474, and 504-506 contribute to the dUMP site; these read QRSWD and HIY.

It in the N-terminal section; belongs to the dihydrofolate reductase family. In the C-terminal section; belongs to the thymidylate synthase family.

The catalysed reaction is (6S)-5,6,7,8-tetrahydrofolate + NADP(+) = 7,8-dihydrofolate + NADPH + H(+). It carries out the reaction dUMP + (6R)-5,10-methylene-5,6,7,8-tetrahydrofolate = 7,8-dihydrofolate + dTMP. It functions in the pathway cofactor biosynthesis; tetrahydrofolate biosynthesis; 5,6,7,8-tetrahydrofolate from 7,8-dihydrofolate: step 1/1. Its function is as follows. Bifunctional enzyme. Involved in de novo dTMP biosynthesis. Key enzyme in folate metabolism. Catalyzes an essential reaction for de novo glycine and purine synthesis, DNA precursor synthesis, and for the conversion of dUMP to dTMP. The polypeptide is Bifunctional dihydrofolate reductase-thymidylate synthase (Acanthamoeba polyphaga mimivirus (APMV)).